We begin with the raw amino-acid sequence, 89 residues long: Small ribosomal subunit protein uS17 (89 aa).

Belongs to the universal ribosomal protein uS17 family. As to quaternary structure, part of the 30S ribosomal subunit.

One of the primary rRNA binding proteins, it binds specifically to the 5'-end of 16S ribosomal RNA. This chain is Small ribosomal subunit protein uS17, found in Polynucleobacter asymbioticus (strain DSM 18221 / CIP 109841 / QLW-P1DMWA-1) (Polynucleobacter necessarius subsp. asymbioticus).